The primary structure comprises 254 residues: Leucyl/phenylalanyl-tRNA--protein transferase (254 aa).

It belongs to the L/F-transferase family.

It localises to the cytoplasm. It catalyses the reaction N-terminal L-lysyl-[protein] + L-leucyl-tRNA(Leu) = N-terminal L-leucyl-L-lysyl-[protein] + tRNA(Leu) + H(+). The catalysed reaction is N-terminal L-arginyl-[protein] + L-leucyl-tRNA(Leu) = N-terminal L-leucyl-L-arginyl-[protein] + tRNA(Leu) + H(+). The enzyme catalyses L-phenylalanyl-tRNA(Phe) + an N-terminal L-alpha-aminoacyl-[protein] = an N-terminal L-phenylalanyl-L-alpha-aminoacyl-[protein] + tRNA(Phe). Its function is as follows. Functions in the N-end rule pathway of protein degradation where it conjugates Leu, Phe and, less efficiently, Met from aminoacyl-tRNAs to the N-termini of proteins containing an N-terminal arginine or lysine. The chain is Leucyl/phenylalanyl-tRNA--protein transferase from Burkholderia orbicola (strain MC0-3).